Here is a 169-residue protein sequence, read N- to C-terminus: Putative hydrogenase maturation protease MJ0631 (169 aa).

Belongs to the peptidase A31 family.

The protein is Putative hydrogenase maturation protease MJ0631 of Methanocaldococcus jannaschii (strain ATCC 43067 / DSM 2661 / JAL-1 / JCM 10045 / NBRC 100440) (Methanococcus jannaschii).